A 122-amino-acid polypeptide reads, in one-letter code: Allatotropin (122 aa).

Positions 1 to 23 are cleaved as a signal peptide; sequence MRVILAITLLFVAGSFIATASKG. Residues 24 to 40 constitute a propeptide that is removed on maturation; that stretch reads RNYPRFFKHRMKLREIR. F53 carries the phenylalanine amide modification. The propeptide occupies 57–122; sequence ESPAERIPDL…GDDSKKGTIA (66 aa).

In terms of tissue distribution, expressed in brain and ventral ganglia but not in the retrocerebral complex (at protein level).

The protein resides in the secreted. Functionally, neuropeptide stimulator of juvenile hormone synthesis. The polypeptide is Allatotropin (Camponotus floridanus (Florida carpenter ant)).